The sequence spans 160 residues: SsrA-binding protein (160 aa).

The protein belongs to the SmpB family.

The protein resides in the cytoplasm. Its function is as follows. Required for rescue of stalled ribosomes mediated by trans-translation. Binds to transfer-messenger RNA (tmRNA), required for stable association of tmRNA with ribosomes. tmRNA and SmpB together mimic tRNA shape, replacing the anticodon stem-loop with SmpB. tmRNA is encoded by the ssrA gene; the 2 termini fold to resemble tRNA(Ala) and it encodes a 'tag peptide', a short internal open reading frame. During trans-translation Ala-aminoacylated tmRNA acts like a tRNA, entering the A-site of stalled ribosomes, displacing the stalled mRNA. The ribosome then switches to translate the ORF on the tmRNA; the nascent peptide is terminated with the 'tag peptide' encoded by the tmRNA and targeted for degradation. The ribosome is freed to recommence translation, which seems to be the essential function of trans-translation. This Erwinia tasmaniensis (strain DSM 17950 / CFBP 7177 / CIP 109463 / NCPPB 4357 / Et1/99) protein is SsrA-binding protein.